We begin with the raw amino-acid sequence, 174 residues long: Nucleoside-triphosphatase THEP1 (174 aa).

Residues 15–22 (GMPGVGKT) and 102–109 (LAIVDEIG) contribute to the ATP site.

It belongs to the THEP1 NTPase family.

The enzyme catalyses a ribonucleoside 5'-triphosphate + H2O = a ribonucleoside 5'-diphosphate + phosphate + H(+). Functionally, has nucleotide phosphatase activity towards ATP, GTP, CTP, TTP and UTP. May hydrolyze nucleoside diphosphates with lower efficiency. This chain is Nucleoside-triphosphatase THEP1, found in Pyrobaculum islandicum (strain DSM 4184 / JCM 9189 / GEO3).